Consider the following 269-residue polypeptide: Mitochondrial distribution and morphology protein 12 (269 aa).

The SMP-LTD domain occupies 1–269 (MSLEVNWEQI…WPNWIEFQGV (269 aa)). Residues 72–119 (ERAGTGEGDEDDGRVAPTSTPMKHQTSGSSDQTDASNPISPSTSHDHE) are disordered. The segment covering 88-114 (PTSTPMKHQTSGSSDQTDASNPISPST) has biased composition (polar residues).

This sequence belongs to the MDM12 family. Component of the ER-mitochondria encounter structure (ERMES) or MDM complex, composed of MMM1, MDM10, MDM12 and MDM34. An MMM1 homodimer associates with one molecule of MDM12 on each side in a pairwise head-to-tail manner, and the SMP-LTD domains of MMM1 and MDM12 generate a continuous hydrophobic tunnel for phospholipid trafficking.

The protein resides in the mitochondrion outer membrane. The protein localises to the endoplasmic reticulum membrane. Its function is as follows. Component of the ERMES/MDM complex, which serves as a molecular tether to connect the endoplasmic reticulum (ER) and mitochondria. Components of this complex are involved in the control of mitochondrial shape and protein biogenesis, and function in nonvesicular lipid trafficking between the ER and mitochondria. MDM12 is required for the interaction of the ER-resident membrane protein MMM1 and the outer mitochondrial membrane-resident beta-barrel protein MDM10. The MDM12-MMM1 subcomplex functions in the major beta-barrel assembly pathway that is responsible for biogenesis of all mitochondrial outer membrane beta-barrel proteins, and acts in a late step after the SAM complex. The MDM10-MDM12-MMM1 subcomplex further acts in the TOM40-specific pathway after the action of the MDM12-MMM1 complex. Essential for establishing and maintaining the structure of mitochondria and maintenance of mtDNA nucleoids. This Komagataella phaffii (strain GS115 / ATCC 20864) (Yeast) protein is Mitochondrial distribution and morphology protein 12.